Here is a 103-residue protein sequence, read N- to C-terminus: Defensin-like protein 290 (103 aa).

The N-terminal stretch at 1-29 (MTALRRTISIIFVFYLSCTLFVNIFGVQA) is a signal peptide. 6 disulfides stabilise this stretch: cysteine 33-cysteine 50, cysteine 39-cysteine 55, cysteine 43-cysteine 57, cysteine 72-cysteine 92, cysteine 78-cysteine 98, and cysteine 84-cysteine 100.

The protein belongs to the DEFL family.

Its subcellular location is the secreted. The protein is Defensin-like protein 290 of Arabidopsis thaliana (Mouse-ear cress).